Consider the following 351-residue polypeptide: MYSLARPFLFAFDAERAHALALRAIDTAYRTGTTALVATRPVPLPTPAFGLMFPNPVGLGAGLDKNGEHIDALLALGFGFVEIGTVTPKPQEGNPKPRMFRLPEYQAVINRMGFNNLGVDVLVKNVQRARRRGGLLGINIGKNKDTPNEEATSDYRYCMERVYPLADYITVNISSPNTAGLRELQEEQALRRLIADLRETQEALAAQHGKRVPMLVKVAPDLNDRDIDAAARVLADLAVDGVIATNTTVTRTLVASHPMAEQAGGLSGAPLLGQSTLVLRRLRARLPESIPLIGVGGITSGADAVAKMAAGASLVQCYSGLVYRGPRLIGECVDAIRRRRESPSGGAVGPL.

Residues 61–65 (AGLDK) and Thr85 contribute to the FMN site. Lys65 is a binding site for substrate. Residue 110-114 (NRMGF) participates in substrate binding. FMN-binding residues include Asn139 and Asn172. Asn172 is a binding site for substrate. Ser175 acts as the Nucleophile in catalysis. Substrate is bound at residue Asn177. FMN-binding residues include Lys217 and Thr245. 246–247 (NT) is a binding site for substrate. FMN is bound by residues Gly268, Gly297, and 318–319 (YS).

The protein belongs to the dihydroorotate dehydrogenase family. Type 2 subfamily. Monomer. The cofactor is FMN.

The protein localises to the cell membrane. It catalyses the reaction (S)-dihydroorotate + a quinone = orotate + a quinol. It functions in the pathway pyrimidine metabolism; UMP biosynthesis via de novo pathway; orotate from (S)-dihydroorotate (quinone route): step 1/1. Catalyzes the conversion of dihydroorotate to orotate with quinone as electron acceptor. This is Dihydroorotate dehydrogenase (quinone) from Xanthomonas campestris pv. campestris (strain 8004).